Consider the following 568-residue polypeptide: Tetratricopeptide repeat protein 22 (568 aa).

TPR repeat units lie at residues 66–99, 101–133, 155–190, 203–237, 260–294, 296–328, and 432–465; these read PAVR…DPGN, NAWA…MGLE, YAHG…GQQI, ATLF…LGEV, KDTF…AKNQ, PILN…LTDP, and PELQ…DDEG.

The polypeptide is Tetratricopeptide repeat protein 22 (Ttc22) (Mus musculus (Mouse)).